The sequence spans 178 residues: Protein-export protein SecB (178 aa).

Residues 1–13 (MADEGDVLTDLDM) show a composition bias toward acidic residues. A disordered region spans residues 1–25 (MADEGDVLTDLDMDPAAGGNGADNR).

The protein belongs to the SecB family. In terms of assembly, homotetramer, a dimer of dimers. One homotetramer interacts with 1 SecA dimer.

It localises to the cytoplasm. Its function is as follows. One of the proteins required for the normal export of preproteins out of the cell cytoplasm. It is a molecular chaperone that binds to a subset of precursor proteins, maintaining them in a translocation-competent state. It also specifically binds to its receptor SecA. In Erythrobacter litoralis (strain HTCC2594), this protein is Protein-export protein SecB.